Here is a 353-residue protein sequence, read N- to C-terminus: Photosystem II D2 protein (353 aa).

Thr2 carries the post-translational modification N-acetylthreonine. Thr2 bears the Phosphothreonine mark. A helical membrane pass occupies residues 41–61; it reads CAYFALGGWFTGTTFVTSWYT. His118 lines the chlorophyll a pocket. The chain crosses the membrane as a helical span at residues 125–141; that stretch reads GFMLRQFELARPVQLRP. The pheophytin a site is built by Gln130 and Asn143. A helical transmembrane segment spans residues 153–166; sequence VFLSVFLIYPLGQS. Position 198 (His198) interacts with chlorophyll a. Residues 208–228 form a helical membrane-spanning segment; it reads AVLLCAIHGATVENTLFEDGD. Residues His215 and Phe262 each coordinate a plastoquinone. His215 contributes to the Fe cation binding site. His269 provides a ligand contact to Fe cation. Residues 279 to 295 form a helical membrane-spanning segment; the sequence is GLWMSAIGVVGLALNLR.

This sequence belongs to the reaction center PufL/M/PsbA/D family. As to quaternary structure, PSII is composed of 1 copy each of membrane proteins PsbA, PsbB, PsbC, PsbD, PsbE, PsbF, PsbH, PsbI, PsbJ, PsbK, PsbL, PsbM, PsbT, PsbX, PsbY, PsbZ, Psb30/Ycf12, at least 3 peripheral proteins of the oxygen-evolving complex and a large number of cofactors. It forms dimeric complexes. The cofactor is The D1/D2 heterodimer binds P680, chlorophylls that are the primary electron donor of PSII, and subsequent electron acceptors. It shares a non-heme iron and each subunit binds pheophytin, quinone, additional chlorophylls, carotenoids and lipids. There is also a Cl(-1) ion associated with D1 and D2, which is required for oxygen evolution. The PSII complex binds additional chlorophylls, carotenoids and specific lipids.. In terms of processing, only phosphorylated in mesophyll cells, phosphorylation increases when cells are grown under high rather than low light regimes (70 vs 900 umol photons/m-2/s).

Its subcellular location is the plastid. It localises to the chloroplast thylakoid membrane. The enzyme catalyses 2 a plastoquinone + 4 hnu + 2 H2O = 2 a plastoquinol + O2. In terms of biological role, photosystem II (PSII) is a light-driven water:plastoquinone oxidoreductase that uses light energy to abstract electrons from H(2)O, generating O(2) and a proton gradient subsequently used for ATP formation. It consists of a core antenna complex that captures photons, and an electron transfer chain that converts photonic excitation into a charge separation. The D1/D2 (PsbA/PsbD) reaction center heterodimer binds P680, the primary electron donor of PSII as well as several subsequent electron acceptors. D2 is needed for assembly of a stable PSII complex. This is Photosystem II D2 protein from Zea mays (Maize).